The primary structure comprises 440 residues: Endoglucanase B (440 aa).

The signal sequence occupies residues 1–33; sequence MNKRLSRGKISLLASVFVTTTFMGGVNVLASTA. Glu179 acts as the Proton donor in catalysis. The Nucleophile role is filled by Glu305. The region spanning 381–440 is the Dockerin domain; sequence TSYSLGDVNKDGKVNAIDYAVLKSILLGTNTNVDLSVSDMNKDGKVNALDLAVLKKMLLS.

Belongs to the glycosyl hydrolase 5 (cellulase A) family.

It carries out the reaction Endohydrolysis of (1-&gt;4)-beta-D-glucosidic linkages in cellulose, lichenin and cereal beta-D-glucans.. The enzyme catalyses Endohydrolysis of (1-&gt;4)-beta-D-xylosidic linkages in xylans.. Functionally, has endoglucanase activity on carboxymethyl-cellulose (CMC), xylan and lichenan, but not Avicel. The protein is Endoglucanase B (engB) of Clostridium cellulovorans (strain ATCC 35296 / DSM 3052 / OCM 3 / 743B).